Here is a 3082-residue protein sequence, read N- to C-terminus: MKKLSVTSKRQYNLYASPISRRLSLLMKLSLETVTVMFLLGASPVLASNLALTGAKNLSQNSPGVNYSKGSHGSIVLSGDDDFCGADYVLGRGGNSTVRNGIPISVEEEYERFVKQKLMNNATSPYSQSSEQQVWTGDGLTSKGSGYMGGKSTDGDKNILPEAYGIYSFATGCGSSAQGNYSVAFGANATALTGGSQAFGVAALASGRVSVAIGVGSEATGEAGVSLGGLSKAAGARSVAIGTRAKAQGEESIAIGSSVKNGDKDGSAVAQGAKAIAIGSNSISFQHYAVAVGAKAHALLSKTVALGYDSVADVDAGIRGYDPVEDEPSKDVSFVWKSSLGAVSVGNRKEGLTRQIIGVAAGTEDTDAVNVAQLKALRGMISEKGGWNLTVNNDNNTVVSSGGALDLSSGSKNLKIVKDGKKNNVTFDVARDLTLKSIKLDGVTLNETGLFIANGPQITASGINAGSQKITGVAEGTDANDAVNFGQLKKIETEVKEQVAASGFVKQDSDTKYLTIGKDTDGDTINIANNKSDKRTLTGIKEGDISKDSSEAITGSQLFTTNQNVKTVSDNLQTAATNIAKTFGGGAKYEDGEWIAPAFKVKTVTGEGKEEEKRYQNVADALAGVGSSITNVQNKVTEQVNNAITKVEGDALLWSDEANAFVARHEKSKLGKGASKATQENSKITYLLDGDVSKDSTDAITGKQLYSLGDKIASYLGGNAKYEDGEWTAPTFKVKTVKEDGKEEEKTYQNVAEALTGVGTSFTNVKNEITKQINHLQSDDSAVVHYDKNKDETGGINYASVTLGKGKDSAAVTLHNVADGSISKDSRDAINGSQIYSLNEQLATYFGGGAKYENGQWTAPIFKVKTVKEDGEEEEKTYQNVAEALTGVGTSFTNIKSEITKQIANEISSVTGDSLVKKDLATNLITIGKEVAGTEINIASVSKADRTLSGVKEAVKDNEAVNKGQLDKGLKHLSDSLQSDDSAVVHYDKKTDETGGINYTSVTLGGKDKTPVALHNVADGSISKDSHDAINGGQIHTIGEDVAKFLGGAASFNNGAFTGPTYKLSNIDAKGDVQQSEFKDIGSAFAGLDTNIKNVNNNVTNKFNELTQNITNVTQQVKGDALLWSDEANAFVARHEKSKLGKGASKATQENSKITYLLDGDVSKDSTDAITGKQLYSLGDKIASYLGGNAKYENGEWTAPTFKVKTVKEDGKEEEKTYQNVAEALTGVGASFTNVKNEITKQINHLQSDDSAVVHYDKNKDETGGINYASVTLGKGKDSAAVTLHNVADGSISKDSRDAINGSQIYSLNEQLATYFGGGAKYENGQWTAPIFKVKTVKEDGEEEEKTYQNVAEALTGVGTSFTNIKSEITKQIANEISSVTGDSLVKKDLATNLITIGKEVAGTEINIASVSKADRTLSGVKEAVKDNEAVNKGQLDTNIKKVEDKLTEAVGKVTQQVKGDALLWSNEDNAFVADHGKDSAKTKSKITHLLDGNIASGSTDAVTGGQLYSLNEQLATYFGGGAKYENGQWTAPTFKVKTVNGEGKEEEQTYQNVAEALTGVGASFMNVQNKITNEITNQVNNAITKVEGDSLVKQDNLGIITLGKERGGLKVDFANRDGLDRTLSGVKEAVNDNEAVNKGQLDADISKVNNNVTNKFNELTQNITNVTQQVKGDALLWSDEANAFVARHEKSKLEKGVSKATQENSKITYLLDGDISKGSTDAVTGGQLYSLNEQLATYFGGGAKYENGQWTAPTFKVKTVNGEGKEEEQTYQNVAAAFEGVGTSFTNIKSEITKQINNEIINVKGDSLVKRDLATNLITIGKEIEGSVINIANKSGEARTISGVKEAVKDNEAVNKGQLDTNIKKVEDKLTEAVGKVTQQVKGDALLWSNEDNAFVADHGKDSAKTKSKITHLLDGNIASGSTDAVTGGQLYSLNEQLATYFGGGAKYENGQWTAPTFKVKTVNGEGKEEEKTYQNVAAAFEGVGTSFTNIKSEITKQIANEISNVTGDSLVKKDLDTNLITIGKEIAGTEINIASVSKADRTLSGVKEAVNDNEAVNKGQLDANISKVNNNVTNKFNELTQSITNVTQQVKGDALLWSDEANAFVARHEKSKLEKGVSKATQENSKITYLLDGDISKGSTDAVTGGQLYSLNEQLATYFGGGAKYENGQWTAPTFKVKTVNGEGKEEEQTYQNVAAAFEGVGTSFTNIKSEITKQINNEIINVKGDSLVKRDLATNLITIGKEIEGSVINIANKSGEARTISGVKEAVKDNEAVNKGQLDTNIKKVEDKLTEAVGKVTQQVKGDALLWSNEDNAFVADHGKDSAKTKSKITHLLDGNIASGSTDAVTGGQLYSLNEQLATYFGGGAKYENGQWTAPTFKVKTVNGEGKEEEKTYQNVAAAFEGVGTSFTHVKNEITKQINHLQSDDSAVVHYDKDDKNGSINYASVTLGKGKDSAAVALHNVADGSISKDSHDAINGGQIHTIGEDVAKFLGGDAAFKDGAFTGPTYKLSNIDAKGDVQQSEFKDIGSAFAGLDTNIKNVNNNVTNKLSELTQNITTVTQQVKGNALLWSDEANAFVARHEKSKLEKGASKAIQENSKITYLLDGDVSKGSTDAVTGGQLYSMSNMLATYLGGNAKYENGEWTAPTFKVKTVNGEGKEEEQTYQNVAEALTGVGTSFTNIKSEIAKQINHLQSDDSAVIHYDKNKDETGTINYASVTLGKGEDSAAVALHNVAAGNIAKDSRDAINGSQLYSLNEQLLTYFGGDAGYKDGQWIAPKFHVLQFKSDGSSGEKESYDNVAAAFEGVNKSLAGMNERINNVTAGQNVSSSSLNWNETEGGYDARHNGVDSKLTHVENGDVSEKSKEAVNGSQLWNTNEKVEAVEKDVKNIEKKVQDIATVADSAVKYEKDSTGKKTNVIKLVGGSESEPVLIDNVADGKIEADSKQAVNGGQLRDYTEKQMKIVLDDAKKYTDERFNDVVNNGINEAKAYTDVKFEALSYTVEEVRKEARQAAAIGLAVSNLRYYDIPGSLSLSFGTGIWRSQSAFAIGAGYTSEDGNIRSNLSITSSGGQWGVGAGITLRLK.

An N-terminal signal peptide occupies residues M1–A47. Residues S48–A376 are binds to host cells. Positions S48 to D2901 are surface exposed passenger domain. The interval T53 to K2850 is does not bind host cells, no host proangiogenic cytokine induction, collagen or fibronectin, no autoagglutination. The segment at I470–K2850 is required to bind fibronectin, not required for surface expression on bacteria, bacterial autoagglutination, host cell binding, collagen binding or host proangiogenic cytokine induction. Residues S2902–P3027 form an outer membrane translocation of the passenger domain region. The next 4 membrane-spanning stretches (beta stranded) occupy residues G3028–W3039, A3044–Y3051, D3055–T3065, and Q3070–K3082. The tract at residues G3028–K3082 is translocator domain.

This sequence belongs to the autotransporter-2 (AT-2) (TC 1.B.40) family. As to quaternary structure, homotrimer. Crystals of the head region form trimers.

The protein localises to the cell surface. It localises to the cell outer membrane. In terms of biological role, mediates bacterial adherence to host endothelial cells and host extracellular matrix proteins (collagen type I, III, IV, laminin and fibronectin). Static versus dynamic adherence results differ slightly; in dynamic adherence studies bacteria bind to fixed components under a constant defined flow rate to simulate in vivo infection conditions. Induces secretion of host proangiogenic cytokines such as VEGFA, ADM, IGFBP-3 and IL-8. May prevent bacterial phagocytosis by macrophages. Probably mediates bacterial autoagglutination. Negatively impacts type IV secretion system effectors (VirB/D4 T4SS and its substrate Bep proteins), possibly by preventing close association of host and bacterial cells. This implies the 2 factors are expressed at different times during infection. The sequence is that of Autotransporter adhesin BadA from Bartonella henselae (Rochalimaea henselae).